The chain runs to 63 residues: Alpha-conotoxin-like Am1.6 (63 aa).

A signal peptide spans 1-21 (MGMRMMFTVFLLVVLATTVVS). Positions 22-46 (FTSYRASDGRNAAAKASDLIALTVR) are excised as a propeptide. Residues 50-52 (SRP) form a ser-Xaa-Pro motif, crucial for potent interaction with nAChR region.

This sequence belongs to the conotoxin A superfamily. In terms of processing, is not hydroxylated. Contains 2 disulfide bonds. In terms of tissue distribution, expressed by the venom duct.

The protein resides in the secreted. Its function is as follows. Alpha-conotoxins act on postsynaptic membranes, they bind to the nicotinic acetylcholine receptors (nAChR) and thus inhibit them. The protein is Alpha-conotoxin-like Am1.6 of Conus amadis (Amadis cone).